The sequence spans 113 residues: Flagellar hook-basal body complex protein FliE (113 aa).

It belongs to the FliE family.

It is found in the bacterial flagellum basal body. The polypeptide is Flagellar hook-basal body complex protein FliE (Rhizobium etli (strain ATCC 51251 / DSM 11541 / JCM 21823 / NBRC 15573 / CFN 42)).